The primary structure comprises 95 residues: Co-chaperonin GroES (95 aa).

Belongs to the GroES chaperonin family. In terms of assembly, heptamer of 7 subunits arranged in a ring. Interacts with the chaperonin GroEL.

Its subcellular location is the cytoplasm. Its function is as follows. Together with the chaperonin GroEL, plays an essential role in assisting protein folding. The GroEL-GroES system forms a nano-cage that allows encapsulation of the non-native substrate proteins and provides a physical environment optimized to promote and accelerate protein folding. GroES binds to the apical surface of the GroEL ring, thereby capping the opening of the GroEL channel. This chain is Co-chaperonin GroES, found in Rickettsia canadensis (strain McKiel).